Consider the following 333-residue polypeptide: EP300-interacting inhibitor of differentiation 3 (333 aa).

The protein belongs to the NSE4 family. As to quaternary structure, component of the SMC5-SMC6 complex which consists at least of SMC5, SMC6, NSMCE2, NSMCE1, NSMCE4A or EID3 and NSMCE3; EID3 seems to be a testis-specific subunit. NSMCE1, NSMCE4A or EID3 and NSMCE3 probably form a subcomplex that bridges the head domains of the SMC5:SMC6 heterodimer. Homodimer, and heterodimer with EID2. Interacts with the C-terminal region of CREBBP. Highly expressed in testis.

It is found in the nucleus. The protein localises to the cytoplasm. Its subcellular location is the chromosome. It localises to the telomere. Tissue-specific component of the SMC5-SMC6 complex, a complex involved in repair of DNA double-strand breaks by homologous recombination. The complex may promote sister chromatid homologous recombination by recruiting the SMC1-SMC3 cohesin complex to double-strand breaks. The complex is required for telomere maintenance via recombination and mediates sumoylation of shelterin complex (telosome) components. In terms of biological role, acts as a repressor of nuclear receptor-dependent transcription possibly by interfering with CREBBP-dependent coactivation. May function as a coinhibitor of other CREBBP/EP300-dependent transcription factors. The chain is EP300-interacting inhibitor of differentiation 3 from Homo sapiens (Human).